Consider the following 439-residue polypeptide: MEKVKIIGGGLAGSEAAWQLAKRKIPVEIYEMRPIVTTPVHKTEYLAELVCSNSFKSTEITNASGLLKEEMRKLDSLLLRVAEETRVPAGVALAVDRELFSKRVQEILLESPYVTVIREEVKKLPKEGIVIVATGPLTSSDFAEHLMEVLDTDSLYFYDAVSPIIYADSINYEKVFSASRYGKGEETYLNCPMTKEEYERFVEELINAETVESHYPGEEKFFEGCLPIEVLAKRGIDTLRYGPMKPIGLIDPKTGKEPYAVVQLRPENIQKTLYSMVGFQTRLKFQEQRRIFRMIPGLENAEFARYGVMHRNTYFYAPKFLKATLQFIKDERVFFAGQLIGVEGYMESAAMGIVAGINAARLYKGKPLIILPPTTMIGALISYVTTKVPVRYYQPMNANWGILLPLDKPIKDKKLRNRLLAERALRDLEDVIRRFAINV.

An FAD-binding site is contributed by 8–13 (GGGLAG).

The protein belongs to the MnmG family. TrmFO subfamily. FAD is required as a cofactor.

The protein resides in the cytoplasm. The enzyme catalyses uridine(54) in tRNA + (6R)-5,10-methylene-5,6,7,8-tetrahydrofolate + NADH + H(+) = 5-methyluridine(54) in tRNA + (6S)-5,6,7,8-tetrahydrofolate + NAD(+). It catalyses the reaction uridine(54) in tRNA + (6R)-5,10-methylene-5,6,7,8-tetrahydrofolate + NADPH + H(+) = 5-methyluridine(54) in tRNA + (6S)-5,6,7,8-tetrahydrofolate + NADP(+). Catalyzes the folate-dependent formation of 5-methyl-uridine at position 54 (M-5-U54) in all tRNAs. This chain is Methylenetetrahydrofolate--tRNA-(uracil-5-)-methyltransferase TrmFO, found in Dictyoglomus turgidum (strain DSM 6724 / Z-1310).